We begin with the raw amino-acid sequence, 456 residues long: Adenylosuccinate synthetase isozyme 1 (456 aa).

The tract at residues 1-30 (MSSGWSQNDHRSYSNPPPVSGKRPRNDSGN) is disordered. GTP is bound by residues 41–47 (GDEGKGK) and 69–71 (GHT). Asp-42 functions as the Proton acceptor in the catalytic mechanism. Asp-42 and Gly-69 together coordinate Mg(2+). Asp-42 serves as a coordination point for substrate. IMP is bound by residues 42–45 (DEGK) and 67–70 (NAGH). The active-site Proton donor is His-70. Ser-130 is subject to Phosphoserine. Thr-162, Arg-176, Asn-255, Thr-270, and Arg-334 together coordinate IMP. Residue 330-336 (VTTGRKR) coordinates substrate. GTP contacts are provided by residues Arg-336, 362 to 364 (KLD), and 444 to 447 (GVGK).

This sequence belongs to the adenylosuccinate synthetase family. As to quaternary structure, homodimer. Mg(2+) serves as cofactor.

The protein resides in the cytoplasm. It carries out the reaction IMP + L-aspartate + GTP = N(6)-(1,2-dicarboxyethyl)-AMP + GDP + phosphate + 2 H(+). It functions in the pathway purine metabolism; AMP biosynthesis via de novo pathway; AMP from IMP: step 1/2. In terms of biological role, component of the purine nucleotide cycle (PNC), which interconverts IMP and AMP to regulate the nucleotide levels in various tissues, and which contributes to glycolysis and ammoniagenesis. Catalyzes the first committed step in the biosynthesis of AMP from IMP. The protein is Adenylosuccinate synthetase isozyme 1 (adss1) of Danio rerio (Zebrafish).